Consider the following 346-residue polypeptide: Fusaric acid resistance protein FusC (346 aa).

4 helical membrane-spanning segments follow: residues 10–30 (VIIGIVSAGVVSALVFPRYTG), 248–268 (VILALGWFWIETAWPSGVMLV), 291–311 (MGMGTALAVCTGFLLTFGIYP), and 315–335 (GFVLLCAALAPLLAIGIYMSL).

It belongs to the aromatic acid exporter ArAE (TC 2.A.85) family.

It is found in the cell membrane. In terms of biological role, involved in the resistance (detoxification) of the fungal toxin fusaric acid. The chain is Fusaric acid resistance protein FusC (fusC) from Burkholderia cepacia (Pseudomonas cepacia).